The chain runs to 188 residues: Large ribosomal subunit protein uL5 (188 aa).

It belongs to the universal ribosomal protein uL5 family. Part of the 50S ribosomal subunit; part of the 5S rRNA/L5/L18/L25 subcomplex. Contacts the 5S rRNA and the P site tRNA. Forms a bridge to the 30S subunit in the 70S ribosome.

In terms of biological role, this is one of the proteins that bind and probably mediate the attachment of the 5S RNA into the large ribosomal subunit, where it forms part of the central protuberance. In the 70S ribosome it contacts protein S13 of the 30S subunit (bridge B1b), connecting the 2 subunits; this bridge is implicated in subunit movement. Contacts the P site tRNA; the 5S rRNA and some of its associated proteins might help stabilize positioning of ribosome-bound tRNAs. This is Large ribosomal subunit protein uL5 from Aquifex aeolicus (strain VF5).